A 492-amino-acid chain; its full sequence is Transmembrane protein 104 homolog (492 aa).

The Cytoplasmic portion of the chain corresponds to 1–18; sequence MQSNTDSSGTSGTYSQTV. A helical membrane pass occupies residues 19-39; the sequence is GLLYVFNLIVGTGALALPKAF. At 40–45 the chain is on the extracellular side; sequence QSAGWL. Residues 46 to 66 form a helical membrane-spanning segment; it reads LSISLLTFSAFMSYVAATFVI. The Cytoplasmic portion of the chain corresponds to 67–114; it reads EALSVANAVLSKKRRVEYDDVVVADGPSTFEIAKKVEVSEMASMFLSK. A helical membrane pass occupies residues 115 to 135; the sequence is VSLVFSYFAIIIYLFGDLAIY. The Extracellular portion of the chain corresponds to 136 to 177; sequence STTVPKSAMNIVCSTINATIVKSSDPCHESWPEILTRMTVYR. A glycan (N-linked (GlcNAc...) asparagine) is linked at Asn152. Residues 178–198 form a helical membrane-spanning segment; the sequence is FFVIVFVVVVCLPMVIAGITK. Residues 199-210 lie on the Cytoplasmic side of the membrane; that stretch reads TRHIQIMTTLSR. Residues 211–231 traverse the membrane as a helical segment; the sequence is WAAFILMISLATMQLSSQGAA. Topologically, residues 232–238 are extracellular; that stretch reads AHPPAYN. The chain crosses the membrane as a helical span at residues 239–259; the sequence is FHGFGSLFGCAVYAFMCHHSI. Residues 260–275 lie on the Cytoplasmic side of the membrane; that stretch reads PSLITPMRTKENVFGK. A helical transmembrane segment spans residues 276-296; that stretch reads IAVVYGIVGVFYFTLSLTGAF. Over 297–325 the chain is Extracellular; it reads AFEHVQDIYTLNFLHDDNTSLVYSIIDYF. Asn314 carries an N-linked (GlcNAc...) asparagine glycan. The helical transmembrane segment at 326 to 346 threads the bilayer; sequence LALFPIITLTSSYPIIALTLI. Residues 347–391 are Cytoplasmic-facing; sequence NNFKVVKDILCPKTGQENESLLEADNQVEDNDTDDEREARNGNPK. The span at 367–382 shows a compositional bias: acidic residues; the sequence is LLEADNQVEDNDTDDE. Residues 367–387 are disordered; that stretch reads LLEADNQVEDNDTDDEREARN. The chain crosses the membrane as a helical span at residues 392 to 412; that stretch reads TIFDVLVPTLVLALPTFLSLL. Residues 413–415 are Extracellular-facing; it reads TDD. Residues 416 to 436 form a helical membrane-spanning segment; the sequence is MLLLASITGSFPGVAVQFAIP. Residues 437-466 are Cytoplasmic-facing; sequence CLLVTAARKHARSVLNFPVPRKNNSPFQSR. Residues 467–487 form a helical membrane-spanning segment; it reads FWIMLISSWAGFSMIMVLLNL. Residues 488-492 lie on the Extracellular side of the membrane; that stretch reads VGVKF.

This sequence belongs to the TMEM104 family.

It localises to the membrane. This is Transmembrane protein 104 homolog from Caenorhabditis briggsae.